We begin with the raw amino-acid sequence, 213 residues long: 3,4-dihydroxy-2-butanone 4-phosphate synthase (213 aa).

Residues 37–38 (RE), aspartate 42, 150–154 (RPGHT), and glutamate 174 each bind D-ribulose 5-phosphate. A Mg(2+)-binding site is contributed by glutamate 38. Histidine 153 serves as a coordination point for Mg(2+).

This sequence belongs to the DHBP synthase family. As to quaternary structure, homodimer. Mg(2+) is required as a cofactor. It depends on Mn(2+) as a cofactor.

It catalyses the reaction D-ribulose 5-phosphate = (2S)-2-hydroxy-3-oxobutyl phosphate + formate + H(+). Its pathway is cofactor biosynthesis; riboflavin biosynthesis; 2-hydroxy-3-oxobutyl phosphate from D-ribulose 5-phosphate: step 1/1. Catalyzes the conversion of D-ribulose 5-phosphate to formate and 3,4-dihydroxy-2-butanone 4-phosphate. This chain is 3,4-dihydroxy-2-butanone 4-phosphate synthase, found in Clostridium botulinum (strain Langeland / NCTC 10281 / Type F).